The primary structure comprises 474 residues: MKLLQKKGYKVERPLNKGSYGTVVLAHRLFRTPRCKDLKYAIKCIKKPAYTFLQEVNILRQLSRSRHRNIIHFVESFEDNVYYYVVLEYCPLGDLYECILNNDFPNAKNQPEMIKNIFLQIIDGVAHLHSHGIYHRDLKPENFLLSLSEDGSELVVKISDFGLACRDKISYDFGTGSDRYMAPEQFEEVDGAGYSPRAADIWALGICLLNLIFARNPFTYPHEKDPIFADYMLDAMTLFDVFPTLSQDTYNVLRACLCVSPEKRSLAKTREAVLAVTKWTTDDEELESFVNEEEEFRASDFMPAEDNVRCTQSDREPLRTPSVLTPANTIQRGLLPSKLPALSDVDENISTSSSPRSPASLAPVNNSERSYDSGLGESLNNMHIGKSIATAVPVNTKRSPYSCSAPAIVFPNSIKGNKDHLKFGRSWCDMDEEDEEDIVSFGSNDDFGASDELSSKHIGLADDWNVLSQWNDNS.

In terms of domain architecture, Protein kinase spans 9 to 280 (YKVERPLNKG…EAVLAVTKWT (272 aa)). ATP is bound by residues 15–23 (LNKGSYGTV) and Lys43. Asp137 acts as the Proton acceptor in catalysis. Residues 345–373 (VDENISTSSSPRSPASLAPVNNSERSYDS) are disordered. Positions 350–363 (STSSSPRSPASLAP) are enriched in low complexity. Phosphoserine is present on residues Ser353, Ser354, Ser357, Ser378, Ser404, and Ser413.

It belongs to the protein kinase superfamily. Ser/Thr protein kinase family.

It is found in the cytoplasm. Its subcellular location is the nucleus. It catalyses the reaction L-seryl-[protein] + ATP = O-phospho-L-seryl-[protein] + ADP + H(+). The catalysed reaction is L-threonyl-[protein] + ATP = O-phospho-L-threonyl-[protein] + ADP + H(+). The sequence is that of Serine/threonine-protein kinase ksp1 (ksp1) from Schizosaccharomyces pombe (strain 972 / ATCC 24843) (Fission yeast).